Reading from the N-terminus, the 290-residue chain is Coiled-coil domain-containing protein 137 (290 aa).

Disordered stretches follow at residues 1–92, 98–117, 139–181, and 269–290; these read MARP…EAQV, LEKE…FKQR, LSKN…EARA, and RQEM…HACL. Over residues 20–39 the composition is skewed to low complexity; the sequence is SGQPQGRRQQQAQGQQRSAS. A compositionally biased stretch (basic and acidic residues) spans 56 to 79; it reads KNQDEQEIPFRLREIMRSRQEMKK. Residues 66 to 89 are a coiled coil; the sequence is RLREIMRSRQEMKKTLSNKKRKKE. Residues 154–163 are compositionally biased toward basic and acidic residues; it reads PKKEKSERKK. Residues 155-192 adopt a coiled-coil conformation; the sequence is KKEKSERKKAFQKRRLEKAQRKREARAVDRLEQELLKD. A compositionally biased stretch (basic residues) spans 164 to 178; it reads AFQKRRLEKAQRKRE.

It localises to the chromosome. The sequence is that of Coiled-coil domain-containing protein 137 (Ccdc137) from Mus musculus (Mouse).